Here is a 107-residue protein sequence, read N- to C-terminus: Large ribosomal subunit protein uL24 (107 aa).

This sequence belongs to the universal ribosomal protein uL24 family. As to quaternary structure, part of the 50S ribosomal subunit.

Its function is as follows. One of two assembly initiator proteins, it binds directly to the 5'-end of the 23S rRNA, where it nucleates assembly of the 50S subunit. One of the proteins that surrounds the polypeptide exit tunnel on the outside of the subunit. This is Large ribosomal subunit protein uL24 from Mesomycoplasma hyopneumoniae (strain 7448) (Mycoplasma hyopneumoniae).